Consider the following 227-residue polypeptide: Guanylate kinase (227 aa).

Residues 21–199 (GNLFMVVAPS…ALAELECIVA (179 aa)) enclose the Guanylate kinase-like domain. Residue 28 to 35 (APSGAGKS) coordinates ATP.

The protein belongs to the guanylate kinase family.

Its subcellular location is the cytoplasm. The catalysed reaction is GMP + ATP = GDP + ADP. Functionally, essential for recycling GMP and indirectly, cGMP. The polypeptide is Guanylate kinase (Burkholderia lata (strain ATCC 17760 / DSM 23089 / LMG 22485 / NCIMB 9086 / R18194 / 383)).